A 187-amino-acid polypeptide reads, in one-letter code: Chlorobenzene dioxygenase subunit beta (187 aa).

Belongs to the bacterial ring-hydroxylating dioxygenase beta subunit family. As to quaternary structure, this dioxygenase system consists of four proteins: the two subunits of the oxygenase component (TecA1 and TecA2), a ferredoxin (TecA3) and a ferredoxin reductase (TecA4).

The catalysed reaction is chlorobenzene + NADH + O2 + H(+) = (1R,2R)-3-chlorocyclohexa-3,5-diene-1,2-diol + NAD(+). It functions in the pathway aromatic compound metabolism. In terms of biological role, part of the oxygenase component of the chlorobenzene dioxygenase system that catalyzes the dihydroxylation of a range of aromatic compounds, including chlorinated benzenes and toluenes, and dinuclear aromatics such as biphenyl and dibenzo-p-dioxin. The beta subunit is not directly involved in the control of substrate specificity. This chain is Chlorobenzene dioxygenase subunit beta, found in Cupriavidus sp. (strain PS12).